The sequence spans 357 residues: 4-hydroxy-3-methylbut-2-en-1-yl diphosphate synthase (flavodoxin) (357 aa).

Positions 264, 267, 299, and 306 each coordinate [4Fe-4S] cluster.

Belongs to the IspG family. The cofactor is [4Fe-4S] cluster.

The enzyme catalyses (2E)-4-hydroxy-3-methylbut-2-enyl diphosphate + oxidized [flavodoxin] + H2O + 2 H(+) = 2-C-methyl-D-erythritol 2,4-cyclic diphosphate + reduced [flavodoxin]. It participates in isoprenoid biosynthesis; isopentenyl diphosphate biosynthesis via DXP pathway; isopentenyl diphosphate from 1-deoxy-D-xylulose 5-phosphate: step 5/6. Its function is as follows. Converts 2C-methyl-D-erythritol 2,4-cyclodiphosphate (ME-2,4cPP) into 1-hydroxy-2-methyl-2-(E)-butenyl 4-diphosphate. The polypeptide is 4-hydroxy-3-methylbut-2-en-1-yl diphosphate synthase (flavodoxin) (Campylobacter jejuni subsp. jejuni serotype O:6 (strain 81116 / NCTC 11828)).